Consider the following 470-residue polypeptide: MRIFNTLTRKKEEFIPITPGEVKMYVCGPTVYNFFHIGNGRTFIVFDTIRRYLEYRGYEVKFVQNFTDIDDKMIKKANEEGTTVKEIGDKYIKEYYEDADKLQIERATVNPRATEYIEDIIDFVAQLIEKGYAYEVEGDVYFNTKKFNDYGKLSGQSIEDLQMGASNRTSSIADERKNDPMDFAIWKAQKPGEPAWKCPWGMGRPGWHIECSCMAKKILGDTIDIHAGGMDLTFPHHENEVAQSEALTGMRFANYWMHSAYVNINNQKMSKSLNNFFTARDILKEYDSDVVRFFMMSAHYRLQINFSKDLLDSAKASVERLYNAIGNLENLIDEVSRENISEEEVNYLNSLKKYREKYIEKMDDDFNTADALTVLFELTKDTNTNINVNSSKELVNKALNLIRELGAPLGLLQKITKGSLEDEIESLIQQRQDARKNKDFALSDKIRDDLKDRGIVLEDTPQGVRWKKIN.

Cys-27 provides a ligand contact to Zn(2+). The 'HIGH' region motif lies at 29–39; that stretch reads PTVYNFFHIGN. Zn(2+) contacts are provided by Cys-211, His-236, and Glu-240. The short motif at 268–272 is the 'KMSKS' region element; the sequence is KMSKS. An ATP-binding site is contributed by Lys-271.

The protein belongs to the class-I aminoacyl-tRNA synthetase family. In terms of assembly, monomer. The cofactor is Zn(2+).

Its subcellular location is the cytoplasm. The catalysed reaction is tRNA(Cys) + L-cysteine + ATP = L-cysteinyl-tRNA(Cys) + AMP + diphosphate. The polypeptide is Cysteine--tRNA ligase (Clostridium botulinum (strain Eklund 17B / Type B)).